A 55-amino-acid polypeptide reads, in one-letter code: Lantibiotic epilancin 15X (55 aa).

Residues 1–24 (MKKELFDLNLNKDIEAQKSDLNPQ) constitute a propeptide, cleaved by ElxP. Ser-25 is subject to D-lactate; by the dehydratase ElxB and the dehydrogenase ElxO. Ser-27 bears the 2,3-didehydroalanine (Ser); by the dehydratase ElxB mark. Thr-31 and Thr-32 each carry 2,3-didehydrobutyrine; by the dehydratase ElxB. The segment at residues 36 to 40 (SKKLC) is a cross-link (lanthionine (Ser-Cys); by the dehydratase ElxB and the cyclase ElxC). 2 cross-links (beta-methyllanthionine (Thr-Cys); by the dehydratase ElxB and the cyclase ElxC) span residues 44-47 (TLTC) and 46-49 (TCGC). Thr-52 is modified (2,3-didehydrobutyrine; by the dehydratase ElxB).

Maturation of this lantibiotic involves the enzymatic conversion of Thr, and Ser into dehydrated AA by ElxB and the formation of thioether bonds with cysteine by the cyclase ElxC. The next steps are cleavage of the leader peptide by ElxP and membrane translocation by ElxT. The leader peptide may be removed before membrane translocation, in contrast to other lantibiotics for which the cleavage occur after translocation. This is suggested by the probable cytoplasmic localization of the serine protease ElxP that cleaves the leader peptide. In terms of processing, the N-terminal D-lactate is probably produced by dehydration of Ser-25 by ElxB, followed by proteolytic removal of the leader peptide by the serine protease ElxP and hydrolysis of the resulting new N-terminal dehydroalanine. This hydrolysis may occur spontaneously. The pyruvate group thus formed is reduced to D-lactate by the NADPH-dependent oxidoreductase ElxO. This N-terminal D-lactate protects the lantibiotic against degradation against aminopeptidase. Post-translationally, it is not established whether the 2,3-didehydrobutyrines are the E- or Z-isomers.

Its function is as follows. Lanthionine-containing peptide antibiotic (lantibiotic) active on Gram-positive bacteria such as staphylococci, enterococci and streptococci. The bactericidal activity of lantibiotics is based on depolarization of energized bacterial cytoplasmic membranes, initiated by the formation of aqueous transmembrane pores. This Staphylococcus epidermidis protein is Lantibiotic epilancin 15X.